A 306-amino-acid polypeptide reads, in one-letter code: Protoheme IX farnesyltransferase (306 aa).

Transmembrane regions (helical) follow at residues 28–48 (LGLV…AIML), 53–73 (FLSS…IMAG), 105–125 (ASIL…LFTI), 127–147 (IETG…YSVW), 156–176 (TIIG…AIEP), 182–202 (AWML…ALAI), 227–244 (LSML…FFMQ), 246–266 (LGTV…LLAI), and 283–303 (FVYS…VTLI).

The protein belongs to the UbiA prenyltransferase family. Protoheme IX farnesyltransferase subfamily. In terms of assembly, interacts with CtaA.

The protein resides in the cell membrane. The catalysed reaction is heme b + (2E,6E)-farnesyl diphosphate + H2O = Fe(II)-heme o + diphosphate. It functions in the pathway porphyrin-containing compound metabolism; heme O biosynthesis; heme O from protoheme: step 1/1. Functionally, converts heme B (protoheme IX) to heme O by substitution of the vinyl group on carbon 2 of heme B porphyrin ring with a hydroxyethyl farnesyl side group. This chain is Protoheme IX farnesyltransferase, found in Macrococcus caseolyticus (strain JCSC5402) (Macrococcoides caseolyticum).